We begin with the raw amino-acid sequence, 155 residues long: 3-hydroxyacyl-[acyl-carrier-protein] dehydratase FabZ (155 aa).

Histidine 57 is an active-site residue.

This sequence belongs to the thioester dehydratase family. FabZ subfamily.

The protein localises to the cytoplasm. It catalyses the reaction a (3R)-hydroxyacyl-[ACP] = a (2E)-enoyl-[ACP] + H2O. Functionally, involved in unsaturated fatty acids biosynthesis. Catalyzes the dehydration of short chain beta-hydroxyacyl-ACPs and long chain saturated and unsaturated beta-hydroxyacyl-ACPs. The polypeptide is 3-hydroxyacyl-[acyl-carrier-protein] dehydratase FabZ (Sorangium cellulosum (strain So ce56) (Polyangium cellulosum (strain So ce56))).